A 232-amino-acid polypeptide reads, in one-letter code: 5'-methylthioadenosine/S-adenosylhomocysteine nucleosidase (232 aa).

Glutamate 12 functions as the Proton acceptor in the catalytic mechanism. Substrate-binding positions include glycine 78, isoleucine 152, and 173-174; that span reads ME. Aspartate 197 functions as the Proton donor in the catalytic mechanism.

This sequence belongs to the PNP/UDP phosphorylase family. MtnN subfamily. Homodimer.

The catalysed reaction is S-adenosyl-L-homocysteine + H2O = S-(5-deoxy-D-ribos-5-yl)-L-homocysteine + adenine. The enzyme catalyses S-methyl-5'-thioadenosine + H2O = 5-(methylsulfanyl)-D-ribose + adenine. It catalyses the reaction 5'-deoxyadenosine + H2O = 5-deoxy-D-ribose + adenine. Its pathway is amino-acid biosynthesis; L-methionine biosynthesis via salvage pathway; S-methyl-5-thio-alpha-D-ribose 1-phosphate from S-methyl-5'-thioadenosine (hydrolase route): step 1/2. Its function is as follows. Catalyzes the irreversible cleavage of the glycosidic bond in both 5'-methylthioadenosine (MTA) and S-adenosylhomocysteine (SAH/AdoHcy) to adenine and the corresponding thioribose, 5'-methylthioribose and S-ribosylhomocysteine, respectively. Also cleaves 5'-deoxyadenosine, a toxic by-product of radical S-adenosylmethionine (SAM) enzymes, into 5-deoxyribose and adenine. Thus, is required for in vivo function of the radical SAM enzymes biotin synthase and lipoic acid synthase, that are inhibited by 5'-deoxyadenosine accumulation. This chain is 5'-methylthioadenosine/S-adenosylhomocysteine nucleosidase, found in Salmonella choleraesuis (strain SC-B67).